A 219-amino-acid chain; its full sequence is AA11 family lytic polysaccharide monooxygenase A (219 aa).

Positions 1-18 are cleaved as a signal peptide; sequence MMLSKVVMGLLTASLAAA. Position 19 (His-19) interacts with Cu(+). 3 disulfides stabilise this stretch: Cys-58–Cys-154, Cys-94–Cys-116, and Cys-185–Cys-218. An N-linked (GlcNAc...) asparagine glycan is attached at Asn-80. Cu(+) is bound at residue His-89.

This sequence belongs to the polysaccharide monooxygenase AA11 family. Requires Cu(2+) as cofactor.

Its function is as follows. Lytic polysaccharide monooxygenase (LPMO) that depolymerizes chitin via the oxidation of scissile beta-(1-4)-glycosidic bonds, yielding C1 or C4 oxidation products. Catalysis by LPMOs requires the reduction of the active-site copper from Cu(II) to Cu(I) by a reducing agent and H(2)O(2) or O(2) as a cosubstrate. Has considerable affinity for alpha-chitin and, more so, beta-chitin. Active toward both alpha-chitin and beta-chitin allomorphs and enhances chitin degradation by an endoacting chitinase, in particular for alpha-chitin, and so plays a role in fungal chitin turnover. The catalytic activity increases when supplying reactions with hydrogen peroxide, confirming that it has peroxygenase activity. Does not show activity on phosphoric acid-swollen cellulose (PASC), Avicel, tamarind xyloglucan, birchwood xylan, beechwood xylan, acetyl glucuronoxylan from aspen, ivory nut mannan, acetylated konjac glucomannan, potato starch, heparin, hyaluronic acid, and chitosan. The protein is AA11 family lytic polysaccharide monooxygenase A of Aspergillus fumigatus (strain CBS 144.89 / FGSC A1163 / CEA10) (Neosartorya fumigata).